We begin with the raw amino-acid sequence, 143 residues long: Brain ribonuclease (143 aa).

The tract at residues 1 to 21 (KESAAAKFRRQHMDSGSSSSG) is disordered. Residues K7 and R10 each coordinate substrate. Residue H12 is the Proton acceptor of the active site. 4 disulfides stabilise this stretch: C26–C84, C40–C95, C58–C110, and C65–C72. 41-45 (KPVNT) provides a ligand contact to substrate. The N-linked (GlcNAc...) asparagine glycan is linked to N62. Substrate contacts are provided by K66 and R85. H119 functions as the Proton donor in the catalytic mechanism. An O-linked (GalNAc...) threonine glycan is attached at T129. An O-linked (GalNAc...) serine glycan is attached at S133.

This sequence belongs to the pancreatic ribonuclease family.

The protein resides in the secreted. The chain is Brain ribonuclease (BRN) from Ovis aries (Sheep).